Consider the following 597-residue polypeptide: Apurinic-apyrimidinic endonuclease 1 (597 aa).

The segment covering 232–246 (YNNDTKYLSNPKGVT) has biased composition (polar residues). Positions 232–296 (YNNDTKYLSN…IPPIPKNTED (65 aa)) are disordered. Positions 265-274 (NNNNNNNNNK) are enriched in low complexity. Positions 380, 420, 456, 490, 493, 527, 540, 542, and 572 each coordinate Zn(2+). H493 serves as a coordination point for Mn(2+). Positions 540 and 542 each coordinate Mn(2+).

The protein belongs to the AP endonuclease 2 family. The cofactor is Zn(2+). Mn(2+) serves as cofactor. In terms of processing, may be proteolytically cleaved into a 59 kDa form.

It localises to the mitochondrion. Its activity is regulated as follows. Apurinic/apyrimidinic (AP) endonuclease activity is enhanced with increasing concentrations of Mn(2+), while Zn(2+) initially enhances activity but subsequently inhibits activity in a concentration-dependent manner. Co(2+) inhibits apurinic/apyrimidinic (AP) endonuclease activity at concentrations greater than 2.5 mM. Functionally, plays a role in mitochondrial DNA base excision repair (BER) pathway induced by oxidative stress. Has apurinic/apyrimidinic (AP) endonuclease activity towards double-stranded DNA (dsDNA) with a preference for C as opposite base. Has 3'-phosphatase activity; removes 3'-phosphate from blunt-end, recessed, and gapped DNA templates and thus, removes 3'-blocks for DNA polymerase activity during BER. Lacks 3'-5' exonuclease activity and does not cleave damaged bases by nucleotide incision repair (NIR). The sequence is that of Apurinic-apyrimidinic endonuclease 1 from Plasmodium falciparum (isolate 3D7).